Here is a 487-residue protein sequence, read N- to C-terminus: Arginine ADP-riboxanase OspC3 (487 aa).

Positions 1–14 (MRVETHSPSFTNPN) are enriched in polar residues. Residues 1 to 41 (MRVETHSPSFTNPNPAEACSGDPTEMGSRLSGVSRAPLPHA) form a disordered region. NAD(+)-binding residues include histidine 137, glutamine 138, serine 139, serine 164, asparagine 167, and threonine 168. Glutamate 325 is an active-site residue. ANK repeat units lie at residues 368–398 (DAVT…EAKD) and 444–473 (RGDT…DRNL).

This sequence belongs to the OspC family.

It is found in the secreted. The protein localises to the host cytoplasm. It catalyses the reaction L-arginyl-[protein] + NAD(+) = ADP-riboxanated L-argininyl-[protein] + nicotinamide + NH4(+) + H(+). Its function is as follows. ADP-riboxanase effector that inhibits host cell pyroptosis. Acts by mediating arginine ADP-riboxanation of host CASP4/CASP11, blocking CASP4/CASP11 autoprocessing. This prevents CASP4 activation and ability to recognize and cleave GSDMD, thereby inhibiting LPS-induced pyroptosis. ADP-riboxanation takes place in two steps: OspC3 first catalyzes ADP-ribosylation of target Arg, and then initiates a deamination to remove one N-omega group. This Chromobacterium sp. (strain ATCC 53434 / SC 14030) protein is Arginine ADP-riboxanase OspC3.